A 352-amino-acid chain; its full sequence is Uroporphyrinogen decarboxylase (352 aa).

Residues 26 to 30, aspartate 76, tyrosine 153, serine 208, and histidine 323 each bind substrate; that span reads RQAGR.

It belongs to the uroporphyrinogen decarboxylase family. As to quaternary structure, homodimer.

It localises to the cytoplasm. The enzyme catalyses uroporphyrinogen III + 4 H(+) = coproporphyrinogen III + 4 CO2. Its pathway is porphyrin-containing compound metabolism; protoporphyrin-IX biosynthesis; coproporphyrinogen-III from 5-aminolevulinate: step 4/4. In terms of biological role, catalyzes the decarboxylation of four acetate groups of uroporphyrinogen-III to yield coproporphyrinogen-III. The chain is Uroporphyrinogen decarboxylase from Synechococcus sp. (strain CC9605).